Reading from the N-terminus, the 174-residue chain is Shikimate kinase 2 (174 aa).

Residue 12–17 (GCGKTT) coordinates ATP. Residues Thr-16 and Asp-32 each contribute to the Mg(2+) site. Residues Asp-34, Arg-58, and Gly-79 each contribute to the substrate site. An LID domain region spans residues 112–126 (QAAPEEDLRPTLTGK). Arg-120 contributes to the ATP binding site. Residue Arg-139 participates in substrate binding.

It belongs to the shikimate kinase family. AroL subfamily. Monomer. Mg(2+) serves as cofactor.

The protein resides in the cytoplasm. The enzyme catalyses shikimate + ATP = 3-phosphoshikimate + ADP + H(+). The protein operates within metabolic intermediate biosynthesis; chorismate biosynthesis; chorismate from D-erythrose 4-phosphate and phosphoenolpyruvate: step 5/7. In terms of biological role, catalyzes the specific phosphorylation of the 3-hydroxyl group of shikimic acid using ATP as a cosubstrate. This Shigella boydii serotype 18 (strain CDC 3083-94 / BS512) protein is Shikimate kinase 2.